A 615-amino-acid chain; its full sequence is MRLSFGKQRYHGGTTVTLTEQGASDSLRAAQAIFQNHSNEVSSPCPPVTVSRNPQTRLSEPSLQKSGRKQEQKKARIRTKQVPKIKTTAPNDVELSKKHRSSPAGKDNVSSTAQMAAALAHSQSKLSSDNNSSHSSALDTLKVLETPNLNGLLGIHSRSSSRNGSNESLTPGQRTPDNRSQENLLTSFSSGRRLSSSSMEPATNKDSNKALPKRRPSPPLQSSLVGSGQLHENENLSSISIDSRHSLNPDTSDVISNRSQTSLSQTINQLSLCESEPSIASSNTTTTTSNQGSGLPNLVPNYSSDMRKKKLVNKFKRKVFGSKPKHLSSQYEMDASSEELGQHEQQPSMRFKTTLRKTSVSTNAENDHASSLHEGNLRYKYNPSNDTYDVYDDTDSDSESDQNQDALTKPRKRDRIKRKIRNSANKTAHHRPIHRTRDRKFNEDKPWKSHTDITFVTDNERKRYESMWVSNRHRHLNLLSWWPSITGDSGAINTLPEDGLILGIIVRDIWKRSNLPNSLLAEIYTKVDTRKDGTLDRKSFIVGMWLVDQCLYGRKLPNVVEQCVWDSVDRYASTTVVPVSTLKAMAKQKRKQMKEEIKNIKKENRVVLVDHNSSS.

4 disordered regions span residues 38-135 (SNEV…SSHS), 152-260 (LLGI…NRSQ), 277-304 (PSIA…NYSS), and 323-445 (KPKH…NEDK). Residues 50–65 (VSRNPQTRLSEPSLQK) are compositionally biased toward polar residues. Composition is skewed to low complexity over residues 121–135 (HSQS…SSHS) and 157–168 (SRSSSRNGSNES). Serine 180 carries the phosphoserine modification. Residues 184-198 (LLTSFSSGRRLSSSS) are compositionally biased toward low complexity. A compositionally biased stretch (polar residues) spans 248-260 (NPDTSDVISNRSQ). A compositionally biased stretch (low complexity) spans 281–290 (SSNTTTTTSN). Basic and acidic residues predominate over residues 365 to 377 (ENDHASSLHEGNL). Residues 389-402 (DVYDDTDSDSESDQ) show a composition bias toward acidic residues. The segment covering 409–438 (KPRKRDRIKRKIRNSANKTAHHRPIHRTRD) has biased composition (basic residues). The 112-residue stretch at 460 to 571 (ERKRYESMWV…QCVWDSVDRY (112 aa)) folds into the EH domain.

Belongs to the IRS4 family. As to quaternary structure, interacts with INP51.

Its function is as follows. With TAX4, acts as a positive regulator of INP51 activity and phosphatidylinositol 4,5-bisphosphate turnover. Negatively regulates signaling through the cell integrity pathway, including the MAP kinase SLT2. Also seems to be involved in rDNA silencing. The sequence is that of Increased rDNA silencing protein 4 (IRS4) from Saccharomyces cerevisiae (strain ATCC 204508 / S288c) (Baker's yeast).